A 178-amino-acid chain; its full sequence is 2-C-methyl-D-erythritol 2,4-cyclodiphosphate synthase (178 aa).

Positions 24, 26, and 61 each coordinate a divalent metal cation. 4-CDP-2-C-methyl-D-erythritol 2-phosphate is bound at residue 24–26 (DSH). 150 to 153 (TSGE) is a 4-CDP-2-C-methyl-D-erythritol 2-phosphate binding site.

This sequence belongs to the IspF family. Homotrimer. It depends on a divalent metal cation as a cofactor.

It catalyses the reaction 4-CDP-2-C-methyl-D-erythritol 2-phosphate = 2-C-methyl-D-erythritol 2,4-cyclic diphosphate + CMP. Its pathway is isoprenoid biosynthesis; isopentenyl diphosphate biosynthesis via DXP pathway; isopentenyl diphosphate from 1-deoxy-D-xylulose 5-phosphate: step 4/6. Involved in the biosynthesis of isopentenyl diphosphate (IPP) and dimethylallyl diphosphate (DMAPP), two major building blocks of isoprenoid compounds. Catalyzes the conversion of 4-diphosphocytidyl-2-C-methyl-D-erythritol 2-phosphate (CDP-ME2P) to 2-C-methyl-D-erythritol 2,4-cyclodiphosphate (ME-CPP) with a corresponding release of cytidine 5-monophosphate (CMP). The protein is 2-C-methyl-D-erythritol 2,4-cyclodiphosphate synthase of Chlamydia trachomatis serovar L2 (strain ATCC VR-902B / DSM 19102 / 434/Bu).